The chain runs to 362 residues: MIAEKIRVALDERSYDIEMGAGNLDRIGSLCREVGLSGTAAVVSNTTVAPLYYETVRLSMERAGYRVVPVTLPDGEGYKNSATLNLIYDGLVDASLDRGSFILALGGGVIGDMAGFAAASYLRGIPFVQIPTTLLSQVDSSVGGKTGINHPRGKNLIGSFYQPKAVLIDVATLDTLPEREFLSGLGEIVKYGAVLDGGFFDFLEQNAKLLLARDKEALIQAVSRSCAIKAKVVAEDEREGGVRAVLNFGHTLGHAVETLTGYTRYLHGEAVAIGMVQAARISQHYGFCSQADRERIEALIVALGLPIELPIFPAQQYREALSHDKKVRDKGLLFICNQGIGAYRMERLTDLGALLEICGIGE.

Residues 74–79, 108–112, 132–133, Lys145, Lys154, and 172–175 contribute to the NAD(+) site; these read DGEGYK, GVIGD, TT, and TLDT. The Zn(2+) site is built by Glu187, His250, and His267.

It belongs to the sugar phosphate cyclases superfamily. Dehydroquinate synthase family. The cofactor is Co(2+). Requires Zn(2+) as cofactor. NAD(+) serves as cofactor.

Its subcellular location is the cytoplasm. It catalyses the reaction 7-phospho-2-dehydro-3-deoxy-D-arabino-heptonate = 3-dehydroquinate + phosphate. It participates in metabolic intermediate biosynthesis; chorismate biosynthesis; chorismate from D-erythrose 4-phosphate and phosphoenolpyruvate: step 2/7. Catalyzes the conversion of 3-deoxy-D-arabino-heptulosonate 7-phosphate (DAHP) to dehydroquinate (DHQ). This Geobacter sp. (strain M21) protein is 3-dehydroquinate synthase.